The following is a 436-amino-acid chain: Trigger factor (436 aa).

A PPIase FKBP-type domain is found at 163-248 (TDRVIIDFAG…VKNVAEAILP (86 aa)).

This sequence belongs to the FKBP-type PPIase family. Tig subfamily.

It is found in the cytoplasm. It catalyses the reaction [protein]-peptidylproline (omega=180) = [protein]-peptidylproline (omega=0). Involved in protein export. Acts as a chaperone by maintaining the newly synthesized protein in an open conformation. Functions as a peptidyl-prolyl cis-trans isomerase. This chain is Trigger factor, found in Laribacter hongkongensis (strain HLHK9).